A 231-amino-acid chain; its full sequence is tRNA (guanine-N(1)-)-methyltransferase (231 aa).

Residues Gly109 and 133-138 (IGDYVL) each bind S-adenosyl-L-methionine.

It belongs to the RNA methyltransferase TrmD family. In terms of assembly, homodimer.

The protein localises to the cytoplasm. It carries out the reaction guanosine(37) in tRNA + S-adenosyl-L-methionine = N(1)-methylguanosine(37) in tRNA + S-adenosyl-L-homocysteine + H(+). In terms of biological role, specifically methylates guanosine-37 in various tRNAs. The polypeptide is tRNA (guanine-N(1)-)-methyltransferase (Nocardia farcinica (strain IFM 10152)).